Reading from the N-terminus, the 605-residue chain is MIDKLGDFKRDYFCGELTENNIGDEVRLLGWADSVRDHGGVIFINLRDKEGIIQVVIDPSKSPKEAYEKAKKVRSEYVLAVRGRVQRRPAGTENPKLPTGTIEIAVDELRILNTCDILPFPIEDGISAHEEVRLRYRFLDIRRPEMMKKLILRHEVYQATREYLAGHGFLEVETPMLTKSTPEGARDFLVPARLEKGKFYALPQSPQLFKQILMVSGIDRYFQIVKCFRDEDLRKDRQPEFTQIDFEMSFVDEEDVITVSEGLIHYIFKKVLGIELKLPFKRMSYTEAIERYGTDKPDLRYSLELKDITDIAKDVQFKVFKDTVEKGGIVKGINVKGGSKFSRKEIDDLTEEAKKYGAKGMAWIKINEDGSLQSPIVKFFTEEQINKIKEIMEGENGDLLIFIADSYEITHRVLGFLRKHLAEKLKLIPENVWEFVWVVDFPLVEWDEEEGRLVALHHPFTSPKEEDIDRLDEAIQDKKVALSFRSRAYDLVLNGEEIGGGSIRIHSSHIQKKVFELLGISDEEAEEKFGFLINALKYGAPPHGGLAFGLDRIVALMTGSESIRDVIAFPKTQKGICPLTDAPDFVQEDQLEELGIEVNIPEETV.

An L-aspartate-binding site is contributed by E183. The segment at 207–210 (QLFK) is aspartate. R229 is a binding site for L-aspartate. ATP contacts are provided by residues 229–231 (RDE) and Q238. An L-aspartate-binding site is contributed by H457. ATP is bound at residue E497. L-aspartate is bound at residue R504. An ATP-binding site is contributed by 549–552 (GLDR).

Belongs to the class-II aminoacyl-tRNA synthetase family. Type 1 subfamily. Homodimer.

The protein localises to the cytoplasm. It catalyses the reaction tRNA(Asx) + L-aspartate + ATP = L-aspartyl-tRNA(Asx) + AMP + diphosphate. Its function is as follows. Aspartyl-tRNA synthetase with relaxed tRNA specificity since it is able to aspartylate not only its cognate tRNA(Asp) but also tRNA(Asn). Reaction proceeds in two steps: L-aspartate is first activated by ATP to form Asp-AMP and then transferred to the acceptor end of tRNA(Asp/Asn). The chain is Aspartate--tRNA(Asp/Asn) ligase from Persephonella marina (strain DSM 14350 / EX-H1).